A 405-amino-acid polypeptide reads, in one-letter code: Fragilysin (405 aa).

Residues 1-25 form the signal peptide; the sequence is MFILNFNKMKNVKLLLMLGTAALLA. His-356 is a Zn(2+) binding site. The active site involves Glu-357. The Zn(2+) site is built by His-360 and His-366.

This sequence belongs to the peptidase M10C family. Zn(2+) serves as cofactor.

The protein resides in the secreted. It carries out the reaction Broad proteolytic specificity, bonds hydrolyzed includes -Gly-|-Leu-, -Met-|-Leu-, -Phe-|-Leu-, -Cys-|-Leu-, -Leu-|-Gly-.. Functionally, diarrheal toxin that hydrolyzes gelatin, azocoll, actin, tropomyosin, and fibrinogen. In Bacteroides fragilis, this protein is Fragilysin (btfP).